Consider the following 622-residue polypeptide: Polypeptide N-acetylgalactosaminyltransferase 6 (622 aa).

The Cytoplasmic portion of the chain corresponds to 1 to 8; the sequence is MRLLRRRH. A helical; Signal-anchor for type II membrane protein transmembrane segment spans residues 9–28; the sequence is MPLRLAMVGCAFVLFLFLLH. Over 29-622 the chain is Lumenal; that stretch reads RDVSSREEAT…SDPHQLWLFV (594 aa). Residue Asn86 is glycosylated (N-linked (GlcNAc...) asparagine). 2 disulfide bridges follow: Cys165–Cys402 and Cys393–Cys474. Residues 176-285 form a catalytic subdomain A region; that stretch reads LATTSVIIVF…HGWLEPLLAR (110 aa). Asp269, His271, and His407 together coordinate Mn(2+). Positions 348-410 are catalytic subdomain B; that stretch reads PIKSPTFAGG…PCSVVGHVFR (63 aa). Asn476 carries N-linked (GlcNAc...) asparagine glycosylation. The Ricin B-type lectin domain maps to 506 to 622; the sequence is TNQCLDVGEN…SDPHQLWLFV (117 aa). Cys509 and Cys527 are oxidised to a cystine. UDP-N-acetyl-alpha-D-galactosamine is bound by residues Asp511, Glu514, His528, and Asn533. Intrachain disulfides connect Cys553–Cys566 and Cys597–Cys610.

The protein belongs to the glycosyltransferase 2 family. GalNAc-T subfamily. Requires Mn(2+) as cofactor. In terms of tissue distribution, expressed in placenta and trachea. Weakly expressed in brain and pancreas. Expressed in fibroblast. Weakly or not expressed in lung, liver, muscle, kidney, spleen, thymus, prostate, testis, ovary, intestine, colon, leukocyte, stomach, thyroid, spinal cord, lymph node, trachea, adrenal gland and bone marrow.

It is found in the golgi apparatus membrane. The enzyme catalyses L-seryl-[protein] + UDP-N-acetyl-alpha-D-galactosamine = a 3-O-[N-acetyl-alpha-D-galactosaminyl]-L-seryl-[protein] + UDP + H(+). It catalyses the reaction L-threonyl-[protein] + UDP-N-acetyl-alpha-D-galactosamine = a 3-O-[N-acetyl-alpha-D-galactosaminyl]-L-threonyl-[protein] + UDP + H(+). It functions in the pathway protein modification; protein glycosylation. In terms of biological role, catalyzes the initial reaction in O-linked oligosaccharide biosynthesis, the transfer of an N-acetyl-D-galactosamine residue to a serine or threonine residue on the protein receptor. May participate in synthesis of oncofetal fibronectin. Has activity toward MUC1A, MUC2, EA2 and fibronectin peptides. Glycosylates FGF23. This is Polypeptide N-acetylgalactosaminyltransferase 6 (GALNT6) from Homo sapiens (Human).